A 697-amino-acid chain; its full sequence is Protein Niban 3 (697 aa).

A disordered region spans residues 1–48; sequence MGPDRKEVPLSRGTQAVVVGKGRGAPGDDSSMGGRPSSPLDKQQRQHL.

The protein belongs to the Niban family. Specifically expressed in B-lymphocytes.

The chain is Protein Niban 3 from Homo sapiens (Human).